A 111-amino-acid chain; its full sequence is FK506-binding protein 1 (111 aa).

Positions 1–20 are disordered; the sequence is MGVEKTIITQGSGPSPQVGQ. The span at 7 to 20 shows a compositional bias: polar residues; the sequence is IITQGSGPSPQVGQ. One can recognise a PPIase FKBP-type domain in the interval 19 to 111; sequence GQKVTMEYTG…IFDVELKKIG (93 aa).

Belongs to the FKBP-type PPIase family. FKBP1 subfamily.

It localises to the cytoplasm. The enzyme catalyses [protein]-peptidylproline (omega=180) = [protein]-peptidylproline (omega=0). Inhibited by both FK506 and rapamycin. Its function is as follows. PPIases accelerate the folding of proteins. It catalyzes the cis-trans isomerization of proline imidic peptide bonds in oligopeptides. This chain is FK506-binding protein 1 (FPR1), found in Gibberella zeae (strain ATCC MYA-4620 / CBS 123657 / FGSC 9075 / NRRL 31084 / PH-1) (Wheat head blight fungus).